A 258-amino-acid polypeptide reads, in one-letter code: UDP-N-acetylenolpyruvoylglucosamine reductase (258 aa).

Residue R142 is part of the active site. Catalysis depends on S184, which acts as the Proton donor. Residue E254 is part of the active site.

The protein belongs to the MurB family. FAD is required as a cofactor.

The protein localises to the cytoplasm. The enzyme catalyses UDP-N-acetyl-alpha-D-muramate + NADP(+) = UDP-N-acetyl-3-O-(1-carboxyvinyl)-alpha-D-glucosamine + NADPH + H(+). It functions in the pathway cell wall biogenesis; peptidoglycan biosynthesis. Functionally, cell wall formation. The chain is UDP-N-acetylenolpyruvoylglucosamine reductase from Campylobacter jejuni (strain RM1221).